A 355-amino-acid chain; its full sequence is UDP-N-acetylglucosamine--N-acetylmuramyl-(pentapeptide) pyrophosphoryl-undecaprenol N-acetylglucosamine transferase (355 aa).

UDP-N-acetyl-alpha-D-glucosamine contacts are provided by residues 15-17 (TGG), N127, R163, S191, I244, 263-268 (ALTVSE), and Q288.

Belongs to the glycosyltransferase 28 family. MurG subfamily.

Its subcellular location is the cell inner membrane. It carries out the reaction di-trans,octa-cis-undecaprenyl diphospho-N-acetyl-alpha-D-muramoyl-L-alanyl-D-glutamyl-meso-2,6-diaminopimeloyl-D-alanyl-D-alanine + UDP-N-acetyl-alpha-D-glucosamine = di-trans,octa-cis-undecaprenyl diphospho-[N-acetyl-alpha-D-glucosaminyl-(1-&gt;4)]-N-acetyl-alpha-D-muramoyl-L-alanyl-D-glutamyl-meso-2,6-diaminopimeloyl-D-alanyl-D-alanine + UDP + H(+). It functions in the pathway cell wall biogenesis; peptidoglycan biosynthesis. Cell wall formation. Catalyzes the transfer of a GlcNAc subunit on undecaprenyl-pyrophosphoryl-MurNAc-pentapeptide (lipid intermediate I) to form undecaprenyl-pyrophosphoryl-MurNAc-(pentapeptide)GlcNAc (lipid intermediate II). This is UDP-N-acetylglucosamine--N-acetylmuramyl-(pentapeptide) pyrophosphoryl-undecaprenol N-acetylglucosamine transferase from Salmonella paratyphi A (strain ATCC 9150 / SARB42).